The following is a 253-amino-acid chain: Indole-3-glycerol phosphate synthase (253 aa).

It belongs to the TrpC family.

It carries out the reaction 1-(2-carboxyphenylamino)-1-deoxy-D-ribulose 5-phosphate + H(+) = (1S,2R)-1-C-(indol-3-yl)glycerol 3-phosphate + CO2 + H2O. It functions in the pathway amino-acid biosynthesis; L-tryptophan biosynthesis; L-tryptophan from chorismate: step 4/5. The sequence is that of Indole-3-glycerol phosphate synthase from Bacillus mycoides (strain KBAB4) (Bacillus weihenstephanensis).